The chain runs to 183 residues: MDIDPYKEFGATVELLSFLPSDFFPSVRDLLDTASALYREALESPEHCSPNHTALRQAILCWGELMTLASWVGNNLEDPASREQVVNYVNTNMGLKIRQLLWFHISCLTFGRETVLEYLVSFGVWIRTPPAYRPPNAPILSTLPETTVVRRRGRSPRRRTPSPRRRRSQSPRRRRSQSPASQC.

A disordered region spans residues Asn-136 to Cys-183. Over residues Val-149–Ser-176 the composition is skewed to basic residues. Phosphoserine; by host occurs at positions 155, 162, and 170. A 1; half-length repeat occupies Ser-155–Pro-161. The segment at Ser-155–Gln-177 is 3 X 8 AA repeats of S-P-R-R-R-[PR]-S-Q. Positions Arg-158 to Arg-175 match the Bipartite nuclear localization signal motif. Tandem repeats lie at residues Ser-162 to Gln-169 and Ser-170 to Gln-177. An RNA binding region spans residues Gln-177–Cys-183.

The protein belongs to the orthohepadnavirus core antigen family. Homodimerizes, then multimerizes. Interacts with cytosol exposed regions of viral L glycoprotein present in the reticulum-to-Golgi compartment. Interacts with human FLNB. Phosphorylated form interacts with host importin alpha; this interaction depends on the exposure of the NLS, which itself depends upon genome maturation and/or phosphorylation of the capsid protein. Interacts with host NUP153. In terms of processing, phosphorylated by host SRPK1, SRPK2, and maybe protein kinase C or GAPDH. Phosphorylation is critical for pregenomic RNA packaging. Protein kinase C phosphorylation is stimulated by HBx protein and may play a role in transport of the viral genome to the nucleus at the late step during the viral replication cycle.

It is found in the virion. The protein localises to the host cytoplasm. Functionally, self assembles to form an icosahedral capsid. Most capsids appear to be large particles with an icosahedral symmetry of T=4 and consist of 240 copies of capsid protein, though a fraction forms smaller T=3 particles consisting of 180 capsid proteins. Entering capsids are transported along microtubules to the nucleus. Phosphorylation of the capsid is thought to induce exposure of nuclear localization signal in the C-terminal portion of the capsid protein that allows binding to the nuclear pore complex via the importin (karyopherin-) alpha and beta. Capsids are imported in intact form through the nuclear pore into the nuclear basket, where it probably binds NUP153. Only capsids that contain the mature viral genome can release the viral DNA and capsid protein into the nucleoplasm. Immature capsids get stuck in the basket. Capsids encapsulate the pre-genomic RNA and the P protein. Pre-genomic RNA is reverse-transcribed into DNA while the capsid is still in the cytoplasm. The capsid can then either be directed to the nucleus, providing more genomes for transcription, or bud through the endoplasmic reticulum to provide new virions. This is Capsid protein from Pan troglodytes (Chimpanzee).